The following is a 489-amino-acid chain: Glutamate--tRNA ligase (489 aa).

A 'HIGH' region motif is present at residues 12–22; that stretch reads PSPTGIPHVGM. Positions 256-260 match the 'KMSKS' region motif; the sequence is KLSKR. K259 serves as a coordination point for ATP.

The protein belongs to the class-I aminoacyl-tRNA synthetase family. Glutamate--tRNA ligase type 1 subfamily. As to quaternary structure, monomer.

The protein localises to the cytoplasm. The catalysed reaction is tRNA(Glu) + L-glutamate + ATP = L-glutamyl-tRNA(Glu) + AMP + diphosphate. In terms of biological role, catalyzes the attachment of glutamate to tRNA(Glu) in a two-step reaction: glutamate is first activated by ATP to form Glu-AMP and then transferred to the acceptor end of tRNA(Glu). The protein is Glutamate--tRNA ligase of Mycobacterium ulcerans (strain Agy99).